The sequence spans 360 residues: Phospho-N-acetylmuramoyl-pentapeptide-transferase (360 aa).

The next 10 membrane-spanning stretches (helical) occupy residues 26-46, 74-94, 97-117, 134-154, 168-188, 199-219, 236-256, 263-283, 288-308, and 338-358; these read AILG…KLIE, MGGL…GDLG, YVWV…IDDY, YILQ…TAAN, VMPQ…VGSS, GLAI…AYLS, SGEL…FLWF, VFMG…IAVL, ILLV…ILQV, and VIVR…ATLK.

Belongs to the glycosyltransferase 4 family. MraY subfamily. The cofactor is Mg(2+).

Its subcellular location is the cell inner membrane. The enzyme catalyses UDP-N-acetyl-alpha-D-muramoyl-L-alanyl-gamma-D-glutamyl-meso-2,6-diaminopimeloyl-D-alanyl-D-alanine + di-trans,octa-cis-undecaprenyl phosphate = di-trans,octa-cis-undecaprenyl diphospho-N-acetyl-alpha-D-muramoyl-L-alanyl-D-glutamyl-meso-2,6-diaminopimeloyl-D-alanyl-D-alanine + UMP. It functions in the pathway cell wall biogenesis; peptidoglycan biosynthesis. In terms of biological role, catalyzes the initial step of the lipid cycle reactions in the biosynthesis of the cell wall peptidoglycan: transfers peptidoglycan precursor phospho-MurNAc-pentapeptide from UDP-MurNAc-pentapeptide onto the lipid carrier undecaprenyl phosphate, yielding undecaprenyl-pyrophosphoryl-MurNAc-pentapeptide, known as lipid I. This chain is Phospho-N-acetylmuramoyl-pentapeptide-transferase, found in Shewanella baltica (strain OS195).